The chain runs to 317 residues: Peroxidase 64 (317 aa).

Residues M1 to A22 form the signal peptide. Cystine bridges form between C32–C111, C65–C70, C117–C313, and C195–C227. H63 functions as the Proton acceptor in the catalytic mechanism. Ca(2+)-binding residues include D64, V67, G69, D71, and S73. Position 158 (P158) interacts with substrate. An N-linked (GlcNAc...) asparagine glycan is attached at N163. H188 contributes to the heme b binding site. Position 189 (T189) interacts with Ca(2+). Residues D241, T243, and D248 each coordinate Ca(2+).

Belongs to the peroxidase family. Classical plant (class III) peroxidase subfamily. The cofactor is heme b. Requires Ca(2+) as cofactor. Expressed in the whole plant, but preferentially in roots.

The protein resides in the secreted. The catalysed reaction is 2 a phenolic donor + H2O2 = 2 a phenolic radical donor + 2 H2O. In terms of biological role, removal of H(2)O(2), oxidation of toxic reductants, biosynthesis and degradation of lignin, suberization, auxin catabolism, response to environmental stresses such as wounding, pathogen attack and oxidative stress. These functions might be dependent on each isozyme/isoform in each plant tissue. In Arabidopsis thaliana (Mouse-ear cress), this protein is Peroxidase 64 (PER64).